A 340-amino-acid polypeptide reads, in one-letter code: Probable allantoicase (340 aa).

It belongs to the allantoicase family.

The catalysed reaction is allantoate + H2O = (S)-ureidoglycolate + urea. It participates in nitrogen metabolism; (S)-allantoin degradation; (S)-ureidoglycolate from allantoate (aminidohydrolase route): step 1/1. In Rhizobium meliloti (strain 1021) (Ensifer meliloti), this protein is Probable allantoicase.